The primary structure comprises 83 residues: MIYKAVFVCLVLVLLGDVFCSPRNSGGGTLNDNPFEKRTDCRFVGAKCTKANNPCVGKVCNGYQLYCPADDDHCIMKLTFIPG.

The N-terminal stretch at 1-20 (MIYKAVFVCLVLVLLGDVFC) is a signal peptide. Positions 21-36 (SPRNSGGGTLNDNPFE) are excised as a propeptide. Proline amide is present on proline 82.

In terms of processing, contains 3 disulfide bonds. As to expression, expressed by acrorhagi.

It is found in the secreted. The protein localises to the nematocyst. Toxin. In Actinia equina (Beadlet anemone), this protein is U-actitoxin-Aeq6a.